The chain runs to 495 residues: Glutamate--tRNA ligase (495 aa).

A 'HIGH' region motif is present at residues 14–24; it reads PSPTGYLHIGS. Positions 255-259 match the 'KMSKS' region motif; it reads KLSKR. Lysine 258 is a binding site for ATP.

Belongs to the class-I aminoacyl-tRNA synthetase family. Glutamate--tRNA ligase type 1 subfamily. Monomer.

It is found in the cytoplasm. It carries out the reaction tRNA(Glu) + L-glutamate + ATP = L-glutamyl-tRNA(Glu) + AMP + diphosphate. Functionally, catalyzes the attachment of glutamate to tRNA(Glu) in a two-step reaction: glutamate is first activated by ATP to form Glu-AMP and then transferred to the acceptor end of tRNA(Glu). In Herpetosiphon aurantiacus (strain ATCC 23779 / DSM 785 / 114-95), this protein is Glutamate--tRNA ligase.